A 79-amino-acid polypeptide reads, in one-letter code: Beta-defensin 130 (79 aa).

The N-terminal stretch at 1-22 is a signal peptide; it reads MKLHSLISVLLLFVTLIPKGKT. Intrachain disulfides connect Cys-38–Cys-53 and Cys-43–Cys-60.

This sequence belongs to the beta-defensin family.

It is found in the secreted. Antimicrobial host-defense peptide. The chain is Beta-defensin 130 from Pan troglodytes (Chimpanzee).